A 109-amino-acid polypeptide reads, in one-letter code: N-alpha-acetyltransferase 38, NatC auxiliary subunit (109 aa).

The Sm domain maps to 23–101; sequence LARCKLENLL…VVSIEVETES (79 aa).

This sequence belongs to the snRNP Sm proteins family. As to quaternary structure, component of the N-terminal acetyltransferase C (NatC) complex.

Its subcellular location is the cytoplasm. It is found in the nucleus. In terms of biological role, auxillary component of the N-terminal acetyltransferase C (NatC) complex which catalyzes acetylation of N-terminal methionine residues. N-terminal acetylation protects proteins from ubiquitination and degradation by the N-end rule pathway. The polypeptide is N-alpha-acetyltransferase 38, NatC auxiliary subunit (naa38) (Danio rerio (Zebrafish)).